The primary structure comprises 55 residues: Large ribosomal subunit protein bL33 (55 aa).

This sequence belongs to the bacterial ribosomal protein bL33 family.

The polypeptide is Large ribosomal subunit protein bL33 (Caulobacter vibrioides (strain ATCC 19089 / CIP 103742 / CB 15) (Caulobacter crescentus)).